The sequence spans 114 residues: UPF0212 protein Mbur_0968 (114 aa).

It belongs to the UPF0212 family.

The chain is UPF0212 protein Mbur_0968 from Methanococcoides burtonii (strain DSM 6242 / NBRC 107633 / OCM 468 / ACE-M).